We begin with the raw amino-acid sequence, 446 residues long: T-box transcription factor TBX19 (446 aa).

Positions 43–216 (LEDAPLWQRF…YNPFAKAFLD (174 aa)) form a DNA-binding region, T-box.

The protein localises to the nucleus. Transcriptional regulator involved in developmental processes. Can activate POMC gene expression and repress the alpha glycoprotein subunit and thyroid-stimulating hormone beta promoters. The polypeptide is T-box transcription factor TBX19 (Mus musculus (Mouse)).